The primary structure comprises 512 residues: 2,3-bisphosphoglycerate-independent phosphoglycerate mutase (512 aa).

Positions 14 and 64 each coordinate Mn(2+). Ser64 functions as the Phosphoserine intermediate in the catalytic mechanism. Residues His125, 155-156 (RD), Arg187, Arg193, 259-262 (RADR), and Lys332 contribute to the substrate site. Residues Asp399, His403, Asp440, His441, and His459 each contribute to the Mn(2+) site.

This sequence belongs to the BPG-independent phosphoglycerate mutase family. Monomer. Requires Mn(2+) as cofactor.

It carries out the reaction (2R)-2-phosphoglycerate = (2R)-3-phosphoglycerate. It participates in carbohydrate degradation; glycolysis; pyruvate from D-glyceraldehyde 3-phosphate: step 3/5. Its function is as follows. Catalyzes the interconversion of 2-phosphoglycerate and 3-phosphoglycerate. The protein is 2,3-bisphosphoglycerate-independent phosphoglycerate mutase of Vesicomyosocius okutanii subsp. Calyptogena okutanii (strain HA).